A 466-amino-acid polypeptide reads, in one-letter code: Ribulose bisphosphate carboxylase large chain (466 aa).

Residue K5 is modified to N6,N6,N6-trimethyllysine. Substrate is bound by residues N114 and T164. K166 functions as the Proton acceptor in the catalytic mechanism. K168 provides a ligand contact to substrate. 3 residues coordinate Mg(2+): K192, D194, and E195. K192 bears the N6-carboxylysine mark. H285 functions as the Proton acceptor in the catalytic mechanism. The substrate site is built by R286, H318, and S370.

This sequence belongs to the RuBisCO large chain family. Type I subfamily. As to quaternary structure, heterohexadecamer of 8 large chains and 8 small chains; disulfide-linked. The disulfide link is formed within the large subunit homodimers. Requires Mg(2+) as cofactor. The disulfide bond which can form in the large chain dimeric partners within the hexadecamer appears to be associated with oxidative stress and protein turnover.

The protein resides in the plastid. Its subcellular location is the chloroplast. It carries out the reaction 2 (2R)-3-phosphoglycerate + 2 H(+) = D-ribulose 1,5-bisphosphate + CO2 + H2O. The enzyme catalyses D-ribulose 1,5-bisphosphate + O2 = 2-phosphoglycolate + (2R)-3-phosphoglycerate + 2 H(+). In terms of biological role, ruBisCO catalyzes two reactions: the carboxylation of D-ribulose 1,5-bisphosphate, the primary event in carbon dioxide fixation, as well as the oxidative fragmentation of the pentose substrate in the photorespiration process. Both reactions occur simultaneously and in competition at the same active site. The protein is Ribulose bisphosphate carboxylase large chain of Poliothyrsis sinensis (Chinese pearlbloom tree).